The primary structure comprises 206 residues: MTKRTSAKYKIDRRMGENIWGRPKSPVNRREYGPGQHGQRRKGKMSDFGLQLRAKQKLKGYYGDLTEKQFRRIYGEAERVKGDTGENLIGLLERRLDAVVYRAKFVPTVFAARQFVNHGHVLVNGKRVNIPSYRVKEGDVIEVRERSKQLASVLEAVSLAERDVPDYLEVDHSKMTATFVRTPHLGDVPYAVVMEPNLVVEYYAKN.

The segment at 18–45 (NIWGRPKSPVNRREYGPGQHGQRRKGKM) is disordered. Positions 94–157 (RRLDAVVYRA…KQLASVLEAV (64 aa)) constitute an S4 RNA-binding domain.

It belongs to the universal ribosomal protein uS4 family. In terms of assembly, part of the 30S ribosomal subunit. Contacts protein S5. The interaction surface between S4 and S5 is involved in control of translational fidelity.

Functionally, one of the primary rRNA binding proteins, it binds directly to 16S rRNA where it nucleates assembly of the body of the 30S subunit. In terms of biological role, with S5 and S12 plays an important role in translational accuracy. This is Small ribosomal subunit protein uS4 from Ruegeria pomeroyi (strain ATCC 700808 / DSM 15171 / DSS-3) (Silicibacter pomeroyi).